The sequence spans 514 residues: Voltage-gated potassium channel regulatory subunit KCNG1 (514 aa).

At Met1–Leu224 the chain is on the cytoplasmic side. Acidic residues predominate over residues Met180–Ser196. The interval Met180–Arg205 is disordered. Residues Pro225–Val246 form a helical membrane-spanning segment. Over Ser247–Asn267 the chain is Extracellular. Residues Val268–Gln289 traverse the membrane as a helical segment. Over Ala290–Pro300 the chain is Cytoplasmic. Residues Leu301–Ala321 form a helical membrane-spanning segment. Residues Ala322–Val338 lie on the Extracellular side of the membrane. The chain crosses the membrane as a helical; Voltage-sensor span at residues Gly339–His359. At Ser360–Thr374 the chain is on the cytoplasmic side. Residues Arg375 to Tyr396 form a helical membrane-spanning segment. Over Val397–Ile411 the chain is Extracellular. The helical intramembrane region spans Pro412–Thr423. Residues Thr424–Asp429 carry the Selectivity filter motif. The stretch at Thr424 to Val431 is an intramembrane region. Over Pro432–Gln438 the chain is Extracellular. A helical transmembrane segment spans residues Val439–Tyr467. At Leu468–Asn514 the chain is on the cytoplasmic side.

This sequence belongs to the potassium channel family. G (TC 1.A.1.2) subfamily. Kv6.1/KCNG1 sub-subfamily. As to quaternary structure, heterotetramer with KCNB1 or KCNB2.

The protein localises to the cell membrane. Regulatory alpha-subunit of the voltage-gated potassium (Kv) channel which, when coassembled with KCNB1 or KCNB2, can modulate their expression and their gating kinetics by acting on deactivation upon repolarization and inactivation during maintained depolarization. Potassium channel subunit that does not form functional channels by itself. This Mus musculus (Mouse) protein is Voltage-gated potassium channel regulatory subunit KCNG1.